The chain runs to 257 residues: MSYETLLVETQGRVGLITLNRPQALNALNAVLMRELDAALKAFDADRAVGAIVLAGSEKAFAAGADIKEMQGLDFVDGYLADFLGGWEHVANARKPMIAAVSGFALGGGCELAMMCDFIIASETAKFGQPEITLGVIPGMGGSQRLTRAVGKAKAMDLILTGRMMDAAEAERSGLVSRVVAPDRLLEEALGAAEKIASFSLPAAMMAKEAVNRSLELTLAEGLRFERRLFQSLFATEDQKEGMAAFVAKRKAEFKHR.

It belongs to the enoyl-CoA hydratase/isomerase family.

It catalyses the reaction a (3S)-3-hydroxyacyl-CoA = a (2E)-enoyl-CoA + H2O. The enzyme catalyses a 4-saturated-(3S)-3-hydroxyacyl-CoA = a (3E)-enoyl-CoA + H2O. In terms of biological role, could possibly oxidize fatty acids using specific components. The protein is Probable enoyl-CoA hydratase (fadB1) of Rhizobium meliloti (strain 1021) (Ensifer meliloti).